The following is a 902-amino-acid chain: Transcription factor FPSE_08121 (902 aa).

A disordered region spans residues 1–47 (MVSPDNRPGTQGPSASAHAHDSRVPRKRPGSWDNNPSTAGNRAVKKR). A DNA-binding region (zn(2)-C6 fungal-type) is located at residues 52–81 (CVSCRDRKVRCDVVNGGPPCTNCRLDDVDC). Disordered stretches follow at residues 92 to 189 (NPAR…EAEQ), 208 to 234 (HCEQ…PANP), 258 to 277 (ATEA…SANT), and 820 to 839 (TGVA…PNMT). The segment covering 120–137 (TDADTAAPGPAPGSASAT) has biased composition (low complexity). The segment covering 168-177 (ETICDDDENE) has biased composition (acidic residues). Composition is skewed to polar residues over residues 178–187 (NNSWHNQQEA), 220–234 (GAAT…PANP), 262–277 (PPSS…SANT), and 826–839 (GQRS…PNMT).

The protein resides in the nucleus. Functionally, transcription factor; part of the Fusarium detoxification of benzoxazolinone cluster involved in the degradation of benzoxazolinones produced by the host plant. Maize, wheat, and rye produce the 2 benzoxazinone phytoanticipins 2,4-dihy-droxy-7-methoxy-1,4-benzoxazin-3-one (DIMBOA) and 2,4-dihydroxy-1,4-benzoxazin-3-one (DIBOA) that, due to their inherent instability once released, spontaneously degrade to the more stable corresponding benzoxazolinones, 6-methoxy-2-benzoxazolinone (MBOA) and 2-benzoxazolinone (BOA), respectively. FPSE_08121 positively regulates the expression of the FBD cluster gene FPSE_08120 in response to 2-aminophenol (2-AP) treatment and contributes quantitatively to benzoxazolinone tolerance. This is Transcription factor FPSE_08121 from Fusarium pseudograminearum (strain CS3096) (Wheat and barley crown-rot fungus).